Consider the following 485-residue polypeptide: Ribulose bisphosphate carboxylase large chain 2 (485 aa).

2 residues coordinate substrate: Asn-125 and Thr-175. Residue Lys-177 is the Proton acceptor of the active site. Lys-179 is a binding site for substrate. Positions 203, 205, and 206 each coordinate Mg(2+). The residue at position 203 (Lys-203) is an N6-carboxylysine. His-295 functions as the Proton acceptor in the catalytic mechanism. Residues Arg-296, His-328, and Ser-380 each contribute to the substrate site.

Belongs to the RuBisCO large chain family. Type I subfamily. In terms of assembly, heterohexadecamer of 8 large chains and 8 small chains. It depends on Mg(2+) as a cofactor.

The enzyme catalyses 2 (2R)-3-phosphoglycerate + 2 H(+) = D-ribulose 1,5-bisphosphate + CO2 + H2O. It carries out the reaction D-ribulose 1,5-bisphosphate + O2 = 2-phosphoglycolate + (2R)-3-phosphoglycerate + 2 H(+). Its function is as follows. RuBisCO catalyzes two reactions: the carboxylation of D-ribulose 1,5-bisphosphate, the primary event in carbon dioxide fixation, as well as the oxidative fragmentation of the pentose substrate. Both reactions occur simultaneously and in competition at the same active site. This Methylibium petroleiphilum (strain ATCC BAA-1232 / LMG 22953 / PM1) protein is Ribulose bisphosphate carboxylase large chain 2.